The following is a 292-amino-acid chain: Ventral anterior homeobox 2 (292 aa).

Residues 1-36 show a composition bias toward basic and acidic residues; it reads MGDGGAERDRGPKRREEPGGRSGCRGEHRGAEDLRA. The tract at residues 1-74 is disordered; it reads MGDGGAERDR…DGQQALGETD (74 aa). Polar residues predominate over residues 38–55; the sequence is TGSTSPREIAGTSASSPA. Positions 102–161 form a DNA-binding region, homeobox; sequence PKRTRTSFTAEQLYRLEMEFQRCQYVVGRERTELARQLNLSETQVKVWFQNRRTKQKKDQ. A disordered region spans residues 212–241; sequence AGHRGTSLGDPRNSSQRLNPMPSASASSPL.

Belongs to the EMX homeobox family.

It is found in the nucleus. In terms of biological role, transcription factor that may function in dorsoventral specification of the forebrain. Regulates the expression of Wnt signaling antagonists including the expression of a truncated TCF7L2 isoform that cannot bind CTNNB1 and acts therefore as a potent dominant-negative Wnt antagonist. Plays a crucial role in eye development and, in particular, in the specification of the ventral optic vesicle. May be a regulator of axial polarization in the retina. This is Ventral anterior homeobox 2 (Vax2) from Rattus norvegicus (Rat).